A 207-amino-acid polypeptide reads, in one-letter code: Large ribosomal subunit protein uL4 (207 aa).

Residues 50–76 (AVKNRSAVSGGGRKPWKQKGTGRARQG) form a disordered region.

It belongs to the universal ribosomal protein uL4 family. Part of the 50S ribosomal subunit.

Its function is as follows. One of the primary rRNA binding proteins, this protein initially binds near the 5'-end of the 23S rRNA. It is important during the early stages of 50S assembly. It makes multiple contacts with different domains of the 23S rRNA in the assembled 50S subunit and ribosome. In terms of biological role, forms part of the polypeptide exit tunnel. This is Large ribosomal subunit protein uL4 from Macrococcus caseolyticus (strain JCSC5402) (Macrococcoides caseolyticum).